A 325-amino-acid chain; its full sequence is MKTPVHVAVTGAAGQIAYSLLFRIAVGDLFGPHQPVILKLLDVPSAERVLEGVAMELDDCASPLLQEIEVSSDPAEVFDGAEAVFMLGATPRGPGMERRDLLQVNADIFSAQGRALNESASRRVKILVVGNPANTNALIAQRNAPDLAPGCFSAMTRLDHNRATSLLARHCGCNVAEISRVVIWGNHSPTQYPDLHHARVKGKPALSLVDPAWYVETFIPTVQQRGASVIAIRGKSSAASAANAALDHMRSWFLGTPKDDWVSMTVSSDGSYGIAEGLMFSFPVTIENGRFRIVQDLPLDTFSRERLRLTEVELLEERAMVSHLL.

Residue 11–17 coordinates NAD(+); that stretch reads GAAGQIA. R92 and R98 together coordinate substrate. NAD(+) is bound by residues N105, Q112, and 129–131; that span reads VGN. Residues N131 and R162 each coordinate substrate. The active-site Proton acceptor is H187.

It belongs to the LDH/MDH superfamily. MDH type 2 family.

It carries out the reaction (S)-malate + NAD(+) = oxaloacetate + NADH + H(+). Its function is as follows. Catalyzes the reversible oxidation of malate to oxaloacetate. In Methylococcus capsulatus (strain ATCC 33009 / NCIMB 11132 / Bath), this protein is Malate dehydrogenase.